Reading from the N-terminus, the 651-residue chain is Protein transport protein SEC9 (651 aa).

3 disordered regions span residues 1–22 (MGLK…QNKD), 53–299 (AEDK…QAPM), and 313–332 (RNSE…DFEE). Residues serine 79 and serine 92 each carry the phosphoserine modification. Residues 86–112 (NEATAGSNRGSSGTQDLGNGAESNSMQ) show a composition bias toward polar residues. Residues 120–129 (DDYRYDDDPY) show a composition bias toward basic and acidic residues. Polar residues-rich tracts occupy residues 157-218 (GTSL…SLDQ) and 244-284 (DSNT…ANPY). Phosphoserine is present on residues serine 186, serine 190, serine 213, serine 271, and serine 273. Positions 285–296 (SSRSVRQPQSQQ) are enriched in low complexity. Positions 313-327 (RNSEVDLNEEPRTGE) are enriched in basic and acidic residues. At serine 315 the chain carries Phosphoserine. Threonine 355 is modified (phosphothreonine). A Phosphoserine modification is found at serine 359. T-SNARE coiled-coil homology domains follow at residues 434–496 (KFTK…VAEL) and 588–650 (DEME…LAGI).

It belongs to the SNAP-25 family. In terms of assembly, interacts with SRO7 and SRO77.

In terms of biological role, component of a SNARE complex that may be the effector of SEC4 function in exocytosis. This chain is Protein transport protein SEC9 (SEC9), found in Saccharomyces cerevisiae (strain ATCC 204508 / S288c) (Baker's yeast).